The chain runs to 267 residues: Protein TIFY 7 (267 aa).

The Tify domain maps to 113–148 (SSGSSPQLTIFYGGTISVFNDISPDKAQAIMLCAGN). The short motif at 220-244 (PQARKASLARFLEKRKERLMSAMPY) is the Jas element. The Nuclear localization signal motif lies at 222-229 (ARKASLAR).

This sequence belongs to the TIFY/JAZ family. As to quaternary structure, homo- and heterodimer. Interacts with MYC2, MYC3, MYC4, COI1, AFPH2/NINJA, TIFY10A/JAZ1, TIFY10B/JAZ2, TIFY6B/JAZ3, TIFY5A/JAZ8, TIFY9/JAZ10 and TIFY3A/JAZ11. Interacts with RHD6 and RSL1. Post-translationally, ubiquitinated. Targeted for degradation by the SCF(COI1) E3 ubiquitin ligase-proteasome pathway during jasmonate signaling.

The protein resides in the nucleus. Functionally, repressor of jasmonate responses. Jasmonoyl-isoleucine (JA-Ile) specifically promotes COI1-TIFY7/JAZ9 interaction. Interacts with and suppresses RHD6 and RSL1 transcription factor activities to negatively regulate jasmonate-stimulated root hair development. This chain is Protein TIFY 7 (TIFY7), found in Arabidopsis thaliana (Mouse-ear cress).